The primary structure comprises 83 residues: Conotoxin Im22.1 (83 aa).

The signal sequence occupies residues 1 to 18 (MMMRVFIAMFFLLALVEA). A propeptide spanning residues 19–26 (GWPRLYDK) is cleaved from the precursor.

This sequence belongs to the conotoxin E superfamily. Contain 4 disulfide bonds. In terms of tissue distribution, expressed by the venom duct.

The protein resides in the secreted. Functionally, probable neurotoxin. The sequence is that of Conotoxin Im22.1 from Conus imperialis (Imperial cone).